The chain runs to 115 residues: Ribonuclease P protein component 4 (115 aa).

4 residues coordinate Zn(2+): Cys-66, Cys-69, Cys-96, and Cys-99.

The protein belongs to the eukaryotic/archaeal RNase P protein component 4 family. In terms of assembly, consists of a catalytic RNA component and at least 4-5 protein subunits. The cofactor is Zn(2+).

It localises to the cytoplasm. The enzyme catalyses Endonucleolytic cleavage of RNA, removing 5'-extranucleotides from tRNA precursor.. Part of ribonuclease P, a protein complex that generates mature tRNA molecules by cleaving their 5'-ends. The sequence is that of Ribonuclease P protein component 4 from Hyperthermus butylicus (strain DSM 5456 / JCM 9403 / PLM1-5).